The primary structure comprises 903 residues: Valine--tRNA ligase (903 aa).

A compositionally biased stretch (polar residues) spans 1–15 (MVCVTDQNNENPSQN). The interval 1-22 (MVCVTDQNNENPSQNRADKLPK) is disordered. The 'HIGH' region motif lies at 61 to 71 (PNVTGQLHMGH). The 'KMSKS' region motif lies at 552–556 (KMSKS). K555 provides a ligand contact to ATP. The stretch at 836 to 902 (TVDVAAERKR…ERITKRLEEL (67 aa)) forms a coiled coil.

It belongs to the class-I aminoacyl-tRNA synthetase family. ValS type 1 subfamily. Monomer.

It localises to the cytoplasm. The enzyme catalyses tRNA(Val) + L-valine + ATP = L-valyl-tRNA(Val) + AMP + diphosphate. In terms of biological role, catalyzes the attachment of valine to tRNA(Val). As ValRS can inadvertently accommodate and process structurally similar amino acids such as threonine, to avoid such errors, it has a 'posttransfer' editing activity that hydrolyzes mischarged Thr-tRNA(Val) in a tRNA-dependent manner. This Corynebacterium efficiens (strain DSM 44549 / YS-314 / AJ 12310 / JCM 11189 / NBRC 100395) protein is Valine--tRNA ligase.